The following is a 466-amino-acid chain: Delta-1 crystallin (466 aa).

Blocked amino end (Ala) is present on alanine 2.

Belongs to the lyase 1 family. Argininosuccinate lyase subfamily. As to quaternary structure, homotetramer. Post-translationally, the N-terminus is blocked. In terms of tissue distribution, eye lens.

Functionally, delta crystallin, the principal crystallin in embryonic lens, is found only in birds and reptiles. In Gallus gallus (Chicken), this protein is Delta-1 crystallin (ASL1).